Reading from the N-terminus, the 55-residue chain is Large ribosomal subunit protein bL33 (55 aa).

It belongs to the bacterial ribosomal protein bL33 family.

This chain is Large ribosomal subunit protein bL33, found in Sodalis glossinidius (strain morsitans).